Reading from the N-terminus, the 376-residue chain is Putative F-box protein At3g18330 (376 aa).

One can recognise an F-box domain in the interval 1-46 (MPMPNLPKELVEEILSFVPATYLKRLSATCKPWNRLIHNDKRFARK).

This is Putative F-box protein At3g18330 from Arabidopsis thaliana (Mouse-ear cress).